The sequence spans 460 residues: Bifunctional protein GlmU (460 aa).

Residues 1-229 (MTNYAIILAA…FNESLGVNDR (229 aa)) form a pyrophosphorylase region. Residues 8-11 (LAAG), Lys-22, Gln-72, and 77-78 (GT) contribute to the UDP-N-acetyl-alpha-D-glucosamine site. A Mg(2+)-binding site is contributed by Asp-102. The UDP-N-acetyl-alpha-D-glucosamine site is built by Gly-139, Glu-154, Asn-169, and Asn-227. Asn-227 serves as a coordination point for Mg(2+). A linker region spans residues 230–250 (VALATAETVMRQRITQKHMVN). Residues 251–460 (GVTFHNPETV…RLAHHPSRSK (210 aa)) are N-acetyltransferase. Residues Arg-332 and Lys-350 each coordinate UDP-N-acetyl-alpha-D-glucosamine. His-362 serves as the catalytic Proton acceptor. Residues Tyr-365 and Asn-376 each contribute to the UDP-N-acetyl-alpha-D-glucosamine site. Acetyl-CoA-binding positions include Ala-379, 385–386 (NY), Ser-404, Ala-422, and Arg-439.

This sequence in the N-terminal section; belongs to the N-acetylglucosamine-1-phosphate uridyltransferase family. It in the C-terminal section; belongs to the transferase hexapeptide repeat family. Homotrimer. Mg(2+) serves as cofactor.

The protein resides in the cytoplasm. The enzyme catalyses alpha-D-glucosamine 1-phosphate + acetyl-CoA = N-acetyl-alpha-D-glucosamine 1-phosphate + CoA + H(+). It carries out the reaction N-acetyl-alpha-D-glucosamine 1-phosphate + UTP + H(+) = UDP-N-acetyl-alpha-D-glucosamine + diphosphate. It participates in nucleotide-sugar biosynthesis; UDP-N-acetyl-alpha-D-glucosamine biosynthesis; N-acetyl-alpha-D-glucosamine 1-phosphate from alpha-D-glucosamine 6-phosphate (route II): step 2/2. Its pathway is nucleotide-sugar biosynthesis; UDP-N-acetyl-alpha-D-glucosamine biosynthesis; UDP-N-acetyl-alpha-D-glucosamine from N-acetyl-alpha-D-glucosamine 1-phosphate: step 1/1. It functions in the pathway bacterial outer membrane biogenesis; LPS lipid A biosynthesis. Functionally, catalyzes the last two sequential reactions in the de novo biosynthetic pathway for UDP-N-acetylglucosamine (UDP-GlcNAc). The C-terminal domain catalyzes the transfer of acetyl group from acetyl coenzyme A to glucosamine-1-phosphate (GlcN-1-P) to produce N-acetylglucosamine-1-phosphate (GlcNAc-1-P), which is converted into UDP-GlcNAc by the transfer of uridine 5-monophosphate (from uridine 5-triphosphate), a reaction catalyzed by the N-terminal domain. This Streptococcus pyogenes serotype M3 (strain ATCC BAA-595 / MGAS315) protein is Bifunctional protein GlmU.